The primary structure comprises 252 residues: 5-oxoprolinase subunit A (252 aa).

Belongs to the LamB/PxpA family. In terms of assembly, forms a complex composed of PxpA, PxpB and PxpC.

The enzyme catalyses 5-oxo-L-proline + ATP + 2 H2O = L-glutamate + ADP + phosphate + H(+). Its function is as follows. Catalyzes the cleavage of 5-oxoproline to form L-glutamate coupled to the hydrolysis of ATP to ADP and inorganic phosphate. In Bordetella pertussis (strain Tohama I / ATCC BAA-589 / NCTC 13251), this protein is 5-oxoprolinase subunit A.